The primary structure comprises 366 residues: Neutral protease 2 homolog BDBG_02110 (366 aa).

A signal peptide spans 1-19; the sequence is MQLSSVLLTAAGLLAPVYS. The propeptide occupies 23 to 184; that stretch reads ISIGRRSEGL…RAKIHDHLAQ (162 aa). N123 and N192 each carry an N-linked (GlcNAc...) asparagine glycan. Residues C272 and C290 are joined by a disulfide bond. Residue H314 coordinates Zn(2+). Residue E315 is part of the active site. H318 contacts Zn(2+).

Belongs to the peptidase M35 family. Zn(2+) serves as cofactor.

It is found in the secreted. The catalysed reaction is Preferential cleavage of bonds with hydrophobic residues in P1'. Also 3-Asn-|-Gln-4 and 8-Gly-|-Ser-9 bonds in insulin B chain.. Its function is as follows. Secreted metalloproteinase that allows assimilation of proteinaceous substrates. Shows high activities on basic nuclear substrates such as histone and protamine. This chain is Neutral protease 2 homolog BDBG_02110, found in Blastomyces gilchristii (strain SLH14081) (Blastomyces dermatitidis).